We begin with the raw amino-acid sequence, 198 residues long: Crinkler effector protein BLC01 (198 aa).

An N-terminal signal peptide occupies residues 1–15 (MMVKLICAIVDIAGA). Positions 16–55 (AFPIDIDTNELVGDFKKVIKAENSRTIACDANDLRLFLAK) are LQLFLAK domain. A DWL domain region spans residues 56-113 (TDGRWLTEFEVQNGVADISVFEELDVVGAPLNMIGLSEETVSSVAITKELVKAKKTPL). The short motif at 114-119 (HVLVVP) is the HVLVXXP motif element.

Belongs to the Crinkler effector family.

The protein localises to the secreted. It is found in the host cell. Functionally, secreted effector that elicits necrosis in host plants, a characteristic of plant innate immunity. The protein is Crinkler effector protein BLC01 of Bremia lactucae (Lettuce downy mildew).